A 364-amino-acid chain; its full sequence is DNA polymerase IV (364 aa).

The region spanning 14–198 is the UmuC domain; that stretch reads IIHIDMDAFF…LPIEKFHGVG (185 aa). 2 residues coordinate Mg(2+): Asp-18 and Asp-116. The active site involves Glu-117.

It belongs to the DNA polymerase type-Y family. Monomer. Requires Mg(2+) as cofactor.

The protein localises to the cytoplasm. It catalyses the reaction DNA(n) + a 2'-deoxyribonucleoside 5'-triphosphate = DNA(n+1) + diphosphate. Functionally, poorly processive, error-prone DNA polymerase involved in untargeted mutagenesis. Copies undamaged DNA at stalled replication forks, which arise in vivo from mismatched or misaligned primer ends. These misaligned primers can be extended by PolIV. Exhibits no 3'-5' exonuclease (proofreading) activity. May be involved in translesional synthesis, in conjunction with the beta clamp from PolIII. The protein is DNA polymerase IV of Streptococcus pyogenes serotype M12 (strain MGAS2096).